The sequence spans 390 residues: Protein NDRG4-A (390 aa).

A disordered region spans residues 356-390 (LTSASSVDGSRPRPCTQSESSDGIGQINHTMEVSC). Residues 370-390 (CTQSESSDGIGQINHTMEVSC) are compositionally biased toward polar residues.

Belongs to the NDRG family.

The protein resides in the cytoplasm. It localises to the cytosol. Functionally, contributes to the maintenance of intracerebral BDNF levels within the normal range. May enhance growth factor-induced ERK1 and ERK2 phosphorylation. May attenuate growth factor-promoted ELK1 phosphorylation in a microtubule-dependent manner. The polypeptide is Protein NDRG4-A (ndrg4-a) (Xenopus laevis (African clawed frog)).